We begin with the raw amino-acid sequence, 372 residues long: Chaperone protein DnaJ (372 aa).

A J domain is found at 5-70; it reads DYYEVLGVSK…QKRAAYDQYG (66 aa). The CR-type zinc finger occupies 127 to 205; the sequence is GVTKEIRIPT…CHGHGRVERY (79 aa). Residues Cys140, Cys143, Cys157, Cys160, Cys179, Cys182, Cys193, and Cys196 each contribute to the Zn(2+) site. CXXCXGXG motif repeat units follow at residues 140-147, 157-164, 179-186, and 193-200; these read CDICHGSG, CSTCQGAG, CPHCHGRG, and CHKCHGHG.

This sequence belongs to the DnaJ family. Homodimer. It depends on Zn(2+) as a cofactor.

The protein localises to the cytoplasm. Participates actively in the response to hyperosmotic and heat shock by preventing the aggregation of stress-denatured proteins and by disaggregating proteins, also in an autonomous, DnaK-independent fashion. Unfolded proteins bind initially to DnaJ; upon interaction with the DnaJ-bound protein, DnaK hydrolyzes its bound ATP, resulting in the formation of a stable complex. GrpE releases ADP from DnaK; ATP binding to DnaK triggers the release of the substrate protein, thus completing the reaction cycle. Several rounds of ATP-dependent interactions between DnaJ, DnaK and GrpE are required for fully efficient folding. Also involved, together with DnaK and GrpE, in the DNA replication of plasmids through activation of initiation proteins. This Photorhabdus laumondii subsp. laumondii (strain DSM 15139 / CIP 105565 / TT01) (Photorhabdus luminescens subsp. laumondii) protein is Chaperone protein DnaJ.